Here is a 478-residue protein sequence, read N- to C-terminus: 2-succinylbenzoate--CoA ligase (478 aa).

The protein belongs to the ATP-dependent AMP-binding enzyme family. MenE subfamily.

The catalysed reaction is 2-succinylbenzoate + ATP + CoA = 2-succinylbenzoyl-CoA + AMP + diphosphate. It participates in quinol/quinone metabolism; 1,4-dihydroxy-2-naphthoate biosynthesis; 1,4-dihydroxy-2-naphthoate from chorismate: step 5/7. Its pathway is quinol/quinone metabolism; menaquinone biosynthesis. Its function is as follows. Converts 2-succinylbenzoate (OSB) to 2-succinylbenzoyl-CoA (OSB-CoA). The polypeptide is 2-succinylbenzoate--CoA ligase (Bacillus licheniformis (strain ATCC 14580 / DSM 13 / JCM 2505 / CCUG 7422 / NBRC 12200 / NCIMB 9375 / NCTC 10341 / NRRL NRS-1264 / Gibson 46)).